A 445-amino-acid chain; its full sequence is Competence protein E (445 aa).

Positions M1–A23 are cleaved as a signal peptide.

It belongs to the bacterial secretin family. PilQ subfamily.

Its subcellular location is the cell outer membrane. Its function is as follows. Involved in transformation (genetic competence for DNA uptake). In Haemophilus influenzae (strain ATCC 51907 / DSM 11121 / KW20 / Rd), this protein is Competence protein E (comE).